We begin with the raw amino-acid sequence, 72 residues long: MASGRCCTFLEILLAIILPPLGVFLRFGCCSMEFCICLLLTILGYVPGIIYAVYVLVALDSDQYQREYHTLA.

2 helical membrane passes run 9 to 29 (FLEI…RFGC) and 39 to 59 (LLTI…LVAL).

The protein belongs to the UPF0057 (PMP3) family.

Its subcellular location is the membrane. The chain is Hydrophobic protein OSR8 (OSR8) from Oryza sativa subsp. japonica (Rice).